Here is a 234-residue protein sequence, read N- to C-terminus: LexA repressor (234 aa).

The tract at residues 1-29 (MSDAANPEGHKRSLPGRPPGIRADSSGLT) is disordered. Residues 52-72 (MREIGQAVGLSSTSSVAHQLM) constitute a DNA-binding region (H-T-H motif). The tract at residues 90-109 (YEVRGSDQAASVQPTDTAGK) is disordered. Catalysis depends on for autocatalytic cleavage activity residues Ser158 and Lys195.

The protein belongs to the peptidase S24 family. As to quaternary structure, homodimer.

The enzyme catalyses Hydrolysis of Ala-|-Gly bond in repressor LexA.. Functionally, represses a number of genes involved in the response to DNA damage (SOS response), including recA and lexA. In the presence of single-stranded DNA, RecA interacts with LexA causing an autocatalytic cleavage which disrupts the DNA-binding part of LexA, leading to derepression of the SOS regulon and eventually DNA repair. The polypeptide is LexA repressor (Streptomyces coelicolor (strain ATCC BAA-471 / A3(2) / M145)).